Here is an 815-residue protein sequence, read N- to C-terminus: Phenylalanine--tRNA ligase beta subunit (815 aa).

Positions 39–148 constitute a tRNA-binding domain; sequence ATELQKFEVA…EYAVVGDNFT (110 aa). One can recognise a B5 domain in the interval 420–495; that stretch reads LQKIPLDFSV…RIYGYDKIES (76 aa). Mg(2+) is bound by residues Asp-473, Asp-479, Glu-482, and Glu-483. Positions 721 to 814 constitute an FDX-ACB domain; it reads SDFQANFRDY…ISQKFQGTLR (94 aa).

This sequence belongs to the phenylalanyl-tRNA synthetase beta subunit family. Type 1 subfamily. In terms of assembly, tetramer of two alpha and two beta subunits. The cofactor is Mg(2+).

The protein resides in the cytoplasm. The enzyme catalyses tRNA(Phe) + L-phenylalanine + ATP = L-phenylalanyl-tRNA(Phe) + AMP + diphosphate + H(+). The protein is Phenylalanine--tRNA ligase beta subunit of Rickettsia typhi (strain ATCC VR-144 / Wilmington).